Here is a 221-residue protein sequence, read N- to C-terminus: Transmembrane emp24 domain-containing protein 3 (221 aa).

Residues 1–25 (MVHEAPHASSFQMLLQLLLLLLLRA) form the signal peptide. The Lumenal portion of the chain corresponds to 28–184 (LRSAELTFEL…RAEDLNSRVS (157 aa)). One can recognise a GOLD domain in the interval 42–124 (KQCFHEEVEQ…HKTVYFDFQV (83 aa)). Arg-103 is modified (dimethylated arginine). A helical transmembrane segment spans residues 185-205 (YWSVGETIALFVVSFSQVLLL). The Cytoplasmic segment spans residues 206–221 (KSFFTEKRPVNRAVHS). The short motif at 208–209 (FF) is the COPII vesicle coat-binding element. The short motif at 208–221 (FFTEKRPVNRAVHS) is the COPI vesicle coat-binding element.

It belongs to the EMP24/GP25L family. As to quaternary structure, monomer in endoplasmic reticulum, endoplasmic reticulum-Golgi intermediate compartment and cis-Golgi network. Interacts (via C-terminus) with COPG1; the interaction involves dimeric TMED3; however, there are conflicting reports on the interaction. Interacts with GORASP1 and GORASP2.

It is found in the endoplasmic reticulum-Golgi intermediate compartment membrane. It localises to the golgi apparatus. The protein resides in the cis-Golgi network membrane. The protein localises to the golgi stack membrane. Its subcellular location is the endoplasmic reticulum membrane. It is found in the cytoplasmic vesicle. It localises to the COPI-coated vesicle membrane. Potential role in vesicular protein trafficking, mainly in the early secretory pathway. Contributes to the coupled localization of TMED2 and TMED10 in the cis-Golgi network. This Mus musculus (Mouse) protein is Transmembrane emp24 domain-containing protein 3 (Tmed3).